The sequence spans 375 residues: WAT1-related protein At1g70260 (375 aa).

Helical transmembrane passes span 10 to 30, 41 to 61, 72 to 92, 106 to 126, 143 to 163, 191 to 211, 225 to 245, 259 to 278, 289 to 309, and 312 to 332; these read LVPF…TIMA, FVFV…FSFL, IFSW…IFMF, IVVC…SIIL, MGTI…GPFI, WFLG…FNVV, VASF…LFME, LYLI…SVHV, VPLF…SFFV, and LHYG…TVSW. The region spanning 25–134 is the EamA domain; the sequence is ALTIMAKTAL…ILGRSKLDWR (110 aa). Residues 337 to 356 are disordered; that stretch reads ESEEKQSSNEERKSIKTIHH.

The protein belongs to the drug/metabolite transporter (DMT) superfamily. Plant drug/metabolite exporter (P-DME) (TC 2.A.7.4) family.

The protein resides in the membrane. The sequence is that of WAT1-related protein At1g70260 from Arabidopsis thaliana (Mouse-ear cress).